The sequence spans 83 residues: Mu-theraphotoxin-Hhn2p (83 aa).

An N-terminal signal peptide occupies residues 1–21; it reads MKASMYLALAGLVLLFVVGYA. Residues 22–48 constitute a propeptide that is removed on maturation; the sequence is SESEEKEFPRELLSKIFAVDDFKGEER. 3 disulfides stabilise this stretch: cysteine 50–cysteine 65, cysteine 57–cysteine 70, and cysteine 64–cysteine 77. At leucine 81 the chain carries Leucine amide.

This sequence belongs to the neurotoxin 10 (Hwtx-1) family. 15 (Hntx-3) subfamily. As to quaternary structure, monomer. Expressed by the venom gland.

Its subcellular location is the secreted. Its function is as follows. Lethal neurotoxin. Selectively blocks tetrodotoxin-sensitive voltage-gated sodium channels (Nav). Does not affect tetrodotoxin-resistant voltage-gated sodium channels or calcium channels. This chain is Mu-theraphotoxin-Hhn2p, found in Cyriopagopus hainanus (Chinese bird spider).